The sequence spans 793 residues: Signal transducer and activator of transcription 5A (793 aa).

Position 90 is a phosphotyrosine (tyrosine 90). Serine 128 bears the Phosphoserine mark. The 98-residue stretch at 589 to 686 folds into the SH2 domain; that stretch reads WNDGAILGFV…EVFAKYYTPV (98 aa). Position 682 is a phosphotyrosine (tyrosine 682). At tyrosine 694 the chain carries Phosphotyrosine; by JAK2. The segment at 772–793 is disordered; it reads DSLDPRLSPPAGLFTSARSSLS. Serine 779 carries the post-translational modification Phosphoserine.

Belongs to the transcription factor STAT family. Forms a homodimer or a heterodimer with a related family member. Binds NR3C1. Interacts with NCOA1 and SOCS7. Interacts with ERBB4. Interacts with EBF4. ISGylated. Post-translationally, tyrosine phosphorylated in response to KITLG/SCF, IL2, IL3, IL7, IL15, CSF2/GMCSF, GH1, PRL, EPO and THPO. Activated KIT promotes phosphorylation on tyrosine residues and subsequent translocation to the nucleus. Tyrosine phosphorylated in response to constitutively activated FGFR1, FGFR2, FGFR3 and FGFR4. Tyrosine phosphorylation is required for DNA-binding activity and dimerization. Serine phosphorylation is also required for maximal transcriptional activity. Tyrosine phosphorylated in response to signaling via activated FLT3; wild-type FLT3 results in much weaker phosphorylation than constitutively activated mutant FLT3. Alternatively, can be phosphorylated by JAK2 at Tyr-694. Expressed in heart, lung, and weakly in muscle.

Its subcellular location is the cytoplasm. It is found in the nucleus. Its function is as follows. Carries out a dual function: signal transduction and activation of transcription. Mediates cellular responses to the cytokine KITLG/SCF and other growth factors. May mediate cellular responses to activated FGFR1, FGFR2, FGFR3 and FGFR4. Binds to the GAS element and activates PRL-induced transcription. Regulates the expression of milk proteins during lactation. The protein is Signal transducer and activator of transcription 5A (Stat5a) of Rattus norvegicus (Rat).